A 315-amino-acid polypeptide reads, in one-letter code: Ribosomal RNA small subunit methyltransferase H (315 aa).

S-adenosyl-L-methionine-binding positions include 37 to 39 (GGH), D57, F83, D105, and Q112.

This sequence belongs to the methyltransferase superfamily. RsmH family.

The protein localises to the cytoplasm. The enzyme catalyses cytidine(1402) in 16S rRNA + S-adenosyl-L-methionine = N(4)-methylcytidine(1402) in 16S rRNA + S-adenosyl-L-homocysteine + H(+). Functionally, specifically methylates the N4 position of cytidine in position 1402 (C1402) of 16S rRNA. The chain is Ribosomal RNA small subunit methyltransferase H from Pseudomonas putida (strain W619).